The following is a 383-amino-acid chain: Acetylornithine deacetylase (383 aa).

H80 is a binding site for Zn(2+). The active site involves D82. D112 provides a ligand contact to Zn(2+). Residue E144 is part of the active site. Zn(2+) is bound by residues E145, E169, and H355.

Belongs to the peptidase M20A family. ArgE subfamily. In terms of assembly, homodimer. Zn(2+) is required as a cofactor. It depends on Co(2+) as a cofactor. The cofactor is glutathione.

It is found in the cytoplasm. The catalysed reaction is N(2)-acetyl-L-ornithine + H2O = L-ornithine + acetate. Its pathway is amino-acid biosynthesis; L-arginine biosynthesis; L-ornithine from N(2)-acetyl-L-ornithine (linear): step 1/1. Catalyzes the hydrolysis of the amide bond of N(2)-acetylated L-amino acids. Cleaves the acetyl group from N-acetyl-L-ornithine to form L-ornithine, an intermediate in L-arginine biosynthesis pathway, and a branchpoint in the synthesis of polyamines. This Pectobacterium atrosepticum (strain SCRI 1043 / ATCC BAA-672) (Erwinia carotovora subsp. atroseptica) protein is Acetylornithine deacetylase.